The following is a 968-amino-acid chain: MAKVRVHELAKELGITSKDAVTKLQELGEFVRSASSTIEAPVVRKLRNAYPAAGASKSEAPAAAPKAPASPAATRPAPAPGPAAPKAPEPKAEAPAAASAPSAPAPAAPAPAAPAAAASAPSAPAPAAPSTGAKPGARPAPKAEAPAAPARSGGQGSAPRPGGPRPGNNPFATSQGMPRGRGGDNERPPRPGNNPFAPSQGMPRPGGSRTEGERPGGPRPAAGAGGPRPGAPRPGGTQGARPGAPRPAGAPGARPGAGGGNRPTPGMMPNRTERPAPAGAGRPGGGGRGPGRPGGAPGTGGAPGAGGGAPAGGGFGKGGRGRGGTQGAFGKGGAGRGKQRKSKRAKRQELEQMSAPSLGGVSVPRGDGNTVVRLRRGSSITDFADKIEANPAALVTVLFHLGEMATATQSLDEETFALLGEELGYKLQVVSPEDEERELLSGFDIDFDAELEAEGDEELEARPPVVTVMGHVDHGKTRLLDAIRNSDVVAGEHGGITQHIGAYQITTEHEGAERKITFIDTPGHEAFTAMRARGAKVTDIAILVVAADDGVMPQTVEALNHAQAANVPIVVAVNKIDKEGANPDKVRGQLTEYGLVPEEYGGDTMFVEVSARQNLNIDELLEAVLLTADAALDMRANPNKDARGIAIEANLDKGRGAVATVLVQSGTLHVGDTIVAGTAHGRVRAMFDDDGSVLTEAGPSRPVQVLGLSNVPRAGDTFFVTADERTARQIAEKREAADRNAALAKRRKRISLEDFDQAVAEGKIDTLNLILKGDVSGAVEALEDALLKIDVGEGVQLRVIHRGVGAITQNDVNLATVDSAVIIGFNVKPAERVAELADREGVDMRFYSVIYAAIDDIEMALKGMLKPEYEEVQLGTAEVREVFRSSKFGNIAGSIVRSGVIRRNSKARISRDGKIIGDNLTVETLKRFKDDATEVRTDFECGIGLGSYNDINEGDIIETFEMREKPRV.

Positions 51–76 are enriched in low complexity; sequence PAAGASKSEAPAAAPKAPASPAATRP. The disordered stretch occupies residues 51-369; the sequence is PAAGASKSEA…GVSVPRGDGN (319 aa). Positions 77 to 87 are enriched in pro residues; it reads APAPGPAAPKA. Residues 93-102 show a composition bias toward low complexity; it reads EAPAAASAPS. Pro residues predominate over residues 103-112; the sequence is APAPAAPAPA. 3 stretches are compositionally biased toward low complexity: residues 113-122, 128-170, and 239-254; these read APAAAASAPS, APST…GNNP, and GARPGAPRPAGAPGAR. Residues 281–336 show a composition bias toward gly residues; it reads GRPGGGGRGPGRPGGAPGTGGAPGAGGGAPAGGGFGKGGRGRGGTQGAFGKGGAGR. Basic residues predominate over residues 337–346; that stretch reads GKQRKSKRAK. The tr-type G domain maps to 461–632; sequence ARPPVVTVMG…AVLLTADAAL (172 aa). The segment at 470–477 is G1; it reads GHVDHGKT. 470-477 lines the GTP pocket; the sequence is GHVDHGKT. The interval 495–499 is G2; it reads GITQH. The interval 520 to 523 is G3; the sequence is DTPG. GTP-binding positions include 520–524 and 574–577; these read DTPGH and NKID. The segment at 574–577 is G4; sequence NKID. Residues 610–612 are G5; it reads SAR.

Belongs to the TRAFAC class translation factor GTPase superfamily. Classic translation factor GTPase family. IF-2 subfamily.

The protein localises to the cytoplasm. Its function is as follows. One of the essential components for the initiation of protein synthesis. Protects formylmethionyl-tRNA from spontaneous hydrolysis and promotes its binding to the 30S ribosomal subunits. Also involved in the hydrolysis of GTP during the formation of the 70S ribosomal complex. This is Translation initiation factor IF-2 from Arthrobacter sp. (strain FB24).